The chain runs to 757 residues: Tyrosine-protein kinase HTK16 (757 aa).

The region spanning 10 to 102 (WYHGKITREV…GLPCKLVDFC (93 aa)) is the SH2 1 domain. 5 ANK repeats span residues 115 to 147 (GLDT…NVNA), 151 to 180 (SGLT…DASA), 184 to 214 (NGRT…DFLK), 219 to 248 (NGWV…SMYP), and 252 to 281 (DGDT…NQPK). One can recognise an SH2 2 domain in the interval 287–379 (WLHQNLDRNG…GLPTLLQFPV (93 aa)). Disordered regions lie at residues 381–407 (SAEN…PSRP) and 444–467 (PKLP…QKGD). Over residues 455–467 (EVPNSVNVGQKGD) the composition is skewed to polar residues. Residues 484-740 (ISFGKELGVG…PTFNELHSTF (257 aa)) form the Protein kinase domain. ATP contacts are provided by residues 490-498 (LGVGEFGSV) and K516. Residue D608 is the Proton acceptor of the active site. At Y746 the chain carries Phosphotyrosine.

This sequence belongs to the protein kinase superfamily. Tyr protein kinase family. In terms of tissue distribution, epithelial cells.

The enzyme catalyses L-tyrosyl-[protein] + ATP = O-phospho-L-tyrosyl-[protein] + ADP + H(+). May be involved in signal transduction. This is Tyrosine-protein kinase HTK16 (HTK16) from Hydra vulgaris (Hydra).